Here is a 263-residue protein sequence, read N- to C-terminus: 4-hydroxy-tetrahydrodipicolinate reductase (263 aa).

An NAD(+)-binding site is contributed by 10–15 (GASGKM). Residue Arg-38 coordinates NADP(+). NAD(+) is bound by residues 97–99 (GTT) and 123–126 (APNF). His-153 serves as the catalytic Proton donor/acceptor. His-154 contacts (S)-2,3,4,5-tetrahydrodipicolinate. The active-site Proton donor is the Lys-157. Position 163–164 (163–164 (GT)) interacts with (S)-2,3,4,5-tetrahydrodipicolinate.

The protein belongs to the DapB family.

The protein resides in the cytoplasm. The enzyme catalyses (S)-2,3,4,5-tetrahydrodipicolinate + NAD(+) + H2O = (2S,4S)-4-hydroxy-2,3,4,5-tetrahydrodipicolinate + NADH + H(+). The catalysed reaction is (S)-2,3,4,5-tetrahydrodipicolinate + NADP(+) + H2O = (2S,4S)-4-hydroxy-2,3,4,5-tetrahydrodipicolinate + NADPH + H(+). It participates in amino-acid biosynthesis; L-lysine biosynthesis via DAP pathway; (S)-tetrahydrodipicolinate from L-aspartate: step 4/4. In terms of biological role, catalyzes the conversion of 4-hydroxy-tetrahydrodipicolinate (HTPA) to tetrahydrodipicolinate. The sequence is that of 4-hydroxy-tetrahydrodipicolinate reductase from Dehalococcoides mccartyi (strain ATCC BAA-2100 / JCM 16839 / KCTC 5957 / BAV1).